The chain runs to 219 residues: 2-hydroxy-3-keto-5-methylthiopentenyl-1-phosphate phosphatase (219 aa).

It belongs to the HAD-like hydrolase superfamily. MtnX family.

It catalyses the reaction 2-hydroxy-5-methylsulfanyl-3-oxopent-1-enyl phosphate + H2O = 1,2-dihydroxy-5-(methylsulfanyl)pent-1-en-3-one + phosphate. It functions in the pathway amino-acid biosynthesis; L-methionine biosynthesis via salvage pathway; L-methionine from S-methyl-5-thio-alpha-D-ribose 1-phosphate: step 4/6. Its function is as follows. Dephosphorylates 2-hydroxy-3-keto-5-methylthiopentenyl-1-phosphate (HK-MTPenyl-1-P) yielding 1,2-dihydroxy-3-keto-5-methylthiopentene (DHK-MTPene). This chain is 2-hydroxy-3-keto-5-methylthiopentenyl-1-phosphate phosphatase, found in Bacillus cereus (strain ATCC 14579 / DSM 31 / CCUG 7414 / JCM 2152 / NBRC 15305 / NCIMB 9373 / NCTC 2599 / NRRL B-3711).